Consider the following 1124-residue polypeptide: Regulator of nonsense transcripts 1 (1124 aa).

The tract at residues 1–410 is sufficient for interaction with RENT2; it reads MSVEAYGPSS…LRSSVGAPVE (410 aa). Phosphoserine is present on residues Ser10 and Ser31. The interval 39 to 69 is disordered; sequence TLPSQTQTPPGGPGGAGGPGGAGAGGAAGQL. Gly residues predominate over residues 51-66; sequence PGGAGGPGGAGAGGAA. Residues 110–267 form the Upf1 CH-rich domain; it reads TKDLPVHACS…NKLEELWKEN (158 aa). Zn(2+) contacts are provided by Cys118, Cys121, Cys132, Ser135, Cys140, His150, His154, Cys160, Cys178, Cys181, Cys204, and Cys208. The interval 118 to 150 is C3H; sequence CSYCGIHDPACVVYCNTSKKWFCNGRGNTSGSH. The CC/SHH/C stretch occupies residues 132–160; sequence CNTSKKWFCNGRGNTSGSHIVNHLVRAKC. The interval 178 to 208 is C4; that stretch reads CYNCGCRNVFLLGFIPAKADSVVVLLCRQPC. Residues Gln481 and 501–505 each bind ATP; that span reads GTGKT. The residue at position 560 (Ser560) is a Phosphoserine. Residues Gln671, Tyr708, and Glu839 each contribute to the ATP site. Ser951 carries the phosphoserine modification. Disordered stretches follow at residues 1004–1053 and 1066–1091; these read FGQA…VASQ and SMSQ…YLGD. Arg1014 carries the post-translational modification Omega-N-methylarginine. Over residues 1020–1029 the composition is skewed to basic residues; sequence KTGRGGRQKN. Residues 1036-1053 show a composition bias toward polar residues; it reads PSQTTLPNSQASQDVASQ. The span at 1066-1081 shows a compositional bias: low complexity; sequence SMSQPSQMSQPGLSQP. 4 positions are modified to phosphoserine: Ser1084, Ser1102, Ser1105, and Ser1122. 2 short sequence motifs ([ST]-Q motif) span residues 1084 to 1085 and 1102 to 1103; these read SQ. The disordered stretch occupies residues 1105–1124; sequence STYQGERAYQHGGVTGLSQY.

Belongs to the DNA2/NAM7 helicase family. Found in a post-splicing messenger ribonucleoprotein (mRNP) complex. Associates with the exon junction complex (EJC). Associates with the SGM1C complex; is phosphorylated by the complex kinase component SGM1. Part of a complex composed of SMG1, DHX34 and UPF1; within the complex DHX34 acts as a scaffolding protein to facilitate SMG1 phosphorylation of UPF1. Interacts with UPF2. Interacts with UPF3A and UPF3B. Interacts with EST1A. Interacts with SLBP. Interacts (when hyperphosphorylated) with PNRC2. Interacts with AGO1 and AGO2. Interacts with GSPT2. Interacts with isoform 1 and isoform 5 of ADAR/ADAR1. Interacts with SMG7. Interacts with ZC3H12A; this interaction occurs in a mRNA translationally active- and termination-dependent manner and is essential for ZC3H12A-mediated degradation of target mRNAs. Interacts with CPSF6. Interacts with MOV10; the interaction is direct and RNA-dependent. Interacts with SHFL; the interaction increases in the presence of RNA. Interacts with UPF2 and DDX4; interactions are mediated by TDRD6. Interacts with DHX34 and PABPC1/PABP1; the interactions are RNA-independent. Interacts with RBM46. Post-translationally, phosphorylated by SMG1; required for formation of mRNA surveillance complexes. As to expression, localizes in male germ cells.

It localises to the cytoplasm. The protein localises to the P-body. It is found in the nucleus. Its subcellular location is the perinuclear region. The catalysed reaction is ATP + H2O = ADP + phosphate + H(+). Functionally, RNA-dependent helicase required for nonsense-mediated decay (NMD) of aberrant mRNAs containing premature stop codons and modulates the expression level of normal mRNAs. Is recruited to mRNAs upon translation termination and undergoes a cycle of phosphorylation and dephosphorylation; its phosphorylation appears to be a key step in NMD. Recruited by release factors to stalled ribosomes together with the SMG1C protein kinase complex to form the transient SURF (SMG1-UPF1-eRF1-eRF3) complex. In EJC-dependent NMD, the SURF complex associates with the exon junction complex (EJC) (located 50-55 or more nucleotides downstream from the termination codon) through UPF2 and allows the formation of an UPF1-UPF2-UPF3 surveillance complex which is believed to activate NMD. Phosphorylated UPF1 is recognized by EST1B/SMG5, SMG6 and SMG7 which are thought to provide a link to the mRNA degradation machinery involving exonucleolytic and endonucleolytic pathways, and to serve as adapters to protein phosphatase 2A (PP2A), thereby triggering UPF1 dephosphorylation and allowing the recycling of NMD factors. UPF1 can also activate NMD without UPF2 or UPF3, and in the absence of the NMD-enhancing downstream EJC indicative for alternative NMD pathways. Plays a role in replication-dependent histone mRNA degradation at the end of phase S; the function is independent of UPF2. For the recognition of premature termination codons (PTC) and initiation of NMD a competitive interaction between UPF1 and PABPC1 with the ribosome-bound release factors is proposed. The ATPase activity of UPF1 is required for disassembly of mRNPs undergoing NMD. Together with UPF2 and dependent on TDRD6, mediates the degradation of mRNA harboring long 3'UTR by inducing the NMD machinery. Also capable of unwinding double-stranded DNA and translocating on single-stranded DNA. In Mus musculus (Mouse), this protein is Regulator of nonsense transcripts 1.